Here is a 322-residue protein sequence, read N- to C-terminus: Aldo-keto reductase family 1 member C13 (322 aa).

Residues Gly-20–Tyr-24 and Asp-50 each bind NAD(+). The Proton donor role is filled by Tyr-55. A substrate-binding site is contributed by His-117. Residues Ser-166–Asn-167, Gln-190, Phe-216–Tyr-224, and Gln-270–Asn-280 each bind NAD(+).

It belongs to the aldo/keto reductase family. Monomer. In terms of processing, the N-terminus is blocked.

It catalyses the reaction morphine + NAD(+) = morphinone + NADH + H(+). The enzyme catalyses morphine + NADP(+) = morphinone + NADPH + H(+). Strongly inhibited by sulfhydryl reagents and ketamine, but not by pyrazole, barbital and indomethacine. Catalyzes the dehydrogenation of morphine to morphinone. The enzyme also exhibits significant activity for a variety of cyclic and alicyclic alcohols. In addition to xenobiotics, the enzyme catalyzes the dehydrogenation of 17-beta-hydroxysteroids with much higher affinities than morphine. Uses both NAD and NADP, but the activity is much greater with NAD than with NADP. In Mesocricetus auratus (Golden hamster), this protein is Aldo-keto reductase family 1 member C13 (AKR1C13).